Consider the following 154-residue polypeptide: Urease accessory protein UreE (154 aa).

The protein belongs to the UreE family.

Its subcellular location is the cytoplasm. Functionally, involved in urease metallocenter assembly. Binds nickel. Probably functions as a nickel donor during metallocenter assembly. This Prochlorococcus marinus subsp. pastoris (strain CCMP1986 / NIES-2087 / MED4) protein is Urease accessory protein UreE.